A 355-amino-acid chain; its full sequence is 3-dehydroquinate synthase (355 aa).

NAD(+) is bound by residues 105 to 109 (GVVGD), 129 to 130 (TS), Lys-142, Lys-151, and 169 to 172 (TLKT). Residues Glu-184, His-246, and His-263 each contribute to the Zn(2+) site.

It belongs to the sugar phosphate cyclases superfamily. Dehydroquinate synthase family. Requires Co(2+) as cofactor. Zn(2+) serves as cofactor. It depends on NAD(+) as a cofactor.

The protein localises to the cytoplasm. It carries out the reaction 7-phospho-2-dehydro-3-deoxy-D-arabino-heptonate = 3-dehydroquinate + phosphate. Its pathway is metabolic intermediate biosynthesis; chorismate biosynthesis; chorismate from D-erythrose 4-phosphate and phosphoenolpyruvate: step 2/7. Functionally, catalyzes the conversion of 3-deoxy-D-arabino-heptulosonate 7-phosphate (DAHP) to dehydroquinate (DHQ). The polypeptide is 3-dehydroquinate synthase (Streptococcus agalactiae serotype Ia (strain ATCC 27591 / A909 / CDC SS700)).